The following is a 505-amino-acid chain: Light-independent protochlorophyllide reductase subunit B (505 aa).

Position 36 (aspartate 36) interacts with [4Fe-4S] cluster. The active-site Proton donor is the aspartate 291. Position 426–427 (426–427 (GM)) interacts with substrate.

Belongs to the ChlB/BchB/BchZ family. Protochlorophyllide reductase is composed of three subunits; ChlL, ChlN and ChlB. Forms a heterotetramer of two ChlB and two ChlN subunits. Requires [4Fe-4S] cluster as cofactor.

It carries out the reaction chlorophyllide a + oxidized 2[4Fe-4S]-[ferredoxin] + 2 ADP + 2 phosphate = protochlorophyllide a + reduced 2[4Fe-4S]-[ferredoxin] + 2 ATP + 2 H2O. It functions in the pathway porphyrin-containing compound metabolism; chlorophyll biosynthesis (light-independent). In terms of biological role, component of the dark-operative protochlorophyllide reductase (DPOR) that uses Mg-ATP and reduced ferredoxin to reduce ring D of protochlorophyllide (Pchlide) to form chlorophyllide a (Chlide). This reaction is light-independent. The NB-protein (ChlN-ChlB) is the catalytic component of the complex. This chain is Light-independent protochlorophyllide reductase subunit B, found in Gloeobacter violaceus (strain ATCC 29082 / PCC 7421).